The primary structure comprises 224 residues: Small ribosomal subunit protein uS13 (224 aa).

Basic and acidic residues predominate over residues 1–17 (MSEKTDKTEKKQKKAEE). Disordered regions lie at residues 1–64 (MSEK…AEEK) and 184–224 (HERG…EDKK). Composition is skewed to low complexity over residues 20-30 (ETASAEAAPAK) and 38-47 (AKPAEGAPAD). The span at 210 to 224 (KKGEQGGAAKKEDKK) shows a compositional bias: basic and acidic residues.

This sequence belongs to the universal ribosomal protein uS13 family. In terms of assembly, part of the 30S ribosomal subunit. Forms a loose heterodimer with protein S19. Forms two bridges to the 50S subunit in the 70S ribosome.

Functionally, located at the top of the head of the 30S subunit, it contacts several helices of the 16S rRNA. In the 70S ribosome it contacts the 23S rRNA (bridge B1a) and protein L5 of the 50S subunit (bridge B1b), connecting the 2 subunits; these bridges are implicated in subunit movement. This Methanocella arvoryzae (strain DSM 22066 / NBRC 105507 / MRE50) protein is Small ribosomal subunit protein uS13.